Consider the following 274-residue polypeptide: Energy-coupling factor transporter ATP-binding protein EcfA1 (274 aa).

The region spanning 9 to 240 (CSFINVAFSY…EQELQKIRLD (232 aa)) is the ABC transporter domain. 41 to 48 (GHNGSGKS) is a binding site for ATP.

It belongs to the ABC transporter superfamily. Energy-coupling factor EcfA family. Forms a stable energy-coupling factor (ECF) transporter complex composed of 2 membrane-embedded substrate-binding proteins (S component), 2 ATP-binding proteins (A component) and 2 transmembrane proteins (T component).

The protein resides in the cell membrane. ATP-binding (A) component of a common energy-coupling factor (ECF) ABC-transporter complex. Unlike classic ABC transporters this ECF transporter provides the energy necessary to transport a number of different substrates. The chain is Energy-coupling factor transporter ATP-binding protein EcfA1 from Mycoplasma genitalium (strain ATCC 33530 / DSM 19775 / NCTC 10195 / G37) (Mycoplasmoides genitalium).